Consider the following 588-residue polypeptide: MFS siderochrome iron transporter 1 (588 aa).

The next 13 helical transmembrane spans lie at 60 to 80 (QVWS…ITFV), 104 to 124 (LTAS…LPLA), 133 to 153 (PQGF…MAAC), 161 to 181 (AAQV…SIFI), 191 to 211 (ALMF…GGPL), 225 to 245 (YGAF…VFAW), 278 to 298 (IIGI…FSLY), 307 to 327 (SSLV…FALY), 348 to 368 (LGAC…DSYF), 385 to 405 (YIVN…GILV), 413 to 433 (WLAL…MITF), 440 to 460 (IGYI…CVIT), and 473 to 495 (YVAV…GQTV). N-linked (GlcNAc...) asparagine glycosylation is present at N519. The helical transmembrane segment at 552 to 572 (KYMLIGGTAILAVGLGATMMW) threads the bilayer.

Belongs to the major facilitator superfamily.

It localises to the membrane. Its function is as follows. Major facilitator transporter involved in siderophore transport. The sequence is that of MFS siderochrome iron transporter 1 from Ajellomyces capsulatus (Darling's disease fungus).